The chain runs to 202 residues: Imidazoleglycerol-phosphate dehydratase (202 aa).

This sequence belongs to the imidazoleglycerol-phosphate dehydratase family.

Its subcellular location is the cytoplasm. The enzyme catalyses D-erythro-1-(imidazol-4-yl)glycerol 3-phosphate = 3-(imidazol-4-yl)-2-oxopropyl phosphate + H2O. The protein operates within amino-acid biosynthesis; L-histidine biosynthesis; L-histidine from 5-phospho-alpha-D-ribose 1-diphosphate: step 6/9. The chain is Imidazoleglycerol-phosphate dehydratase from Rhizobium etli (strain CIAT 652).